A 367-amino-acid polypeptide reads, in one-letter code: Aspartate-semialdehyde dehydrogenase (367 aa).

Residues 10–13 (RGMV), 37–38 (TS), and Gln-73 each bind NADP(+). Arg-102 contacts phosphate. Cys-135 serves as the catalytic Acyl-thioester intermediate. Cys-135 carries the post-translational modification S-cysteinyl cysteine; in inhibited form. Gln-162 lines the substrate pocket. Residues 165–166 (SG) and Pro-193 contribute to the NADP(+) site. Glu-241 is a substrate binding site. Residue Lys-244 participates in phosphate binding. Arg-267 is a substrate binding site. His-274 functions as the Proton acceptor in the catalytic mechanism. Gln-350 provides a ligand contact to NADP(+).

Belongs to the aspartate-semialdehyde dehydrogenase family. Homodimer.

The catalysed reaction is L-aspartate 4-semialdehyde + phosphate + NADP(+) = 4-phospho-L-aspartate + NADPH + H(+). It participates in amino-acid biosynthesis; L-lysine biosynthesis via DAP pathway; (S)-tetrahydrodipicolinate from L-aspartate: step 2/4. The protein operates within amino-acid biosynthesis; L-methionine biosynthesis via de novo pathway; L-homoserine from L-aspartate: step 2/3. Its pathway is amino-acid biosynthesis; L-threonine biosynthesis; L-threonine from L-aspartate: step 2/5. Functionally, catalyzes the NADPH-dependent formation of L-aspartate-semialdehyde (L-ASA) by the reductive dephosphorylation of L-aspartyl-4-phosphate. This Escherichia coli O6:H1 (strain CFT073 / ATCC 700928 / UPEC) protein is Aspartate-semialdehyde dehydrogenase.